The primary structure comprises 490 residues: uncharacterized protein (490 aa).

The chain crosses the membrane as a helical span at residues 27–47 (VYVFLTTIILLLSLISTLIII).

It is found in the membrane. This is an uncharacterized protein from Borreliella burgdorferi (strain ATCC 35210 / DSM 4680 / CIP 102532 / B31) (Borrelia burgdorferi).